Reading from the N-terminus, the 701-residue chain is Acetyl-coenzyme A synthetase, cytoplasmic (701 aa).

A disordered region spans residues 1–41 (MGLPEERVRSGSGSRGQEEAGAGGRARSWSPPPEVSRSAHV). The interaction with TFEB stretch occupies residues 1-107 (MGLPEERVRS…GATTNICYNV (107 aa)). Phosphoserine is present on residues S28, S30, and S36. CoA is bound at residue 219-222 (RGEK). Phosphoserine occurs at positions 263, 265, and 267. Position 363 (T363) interacts with CoA. K418 is subject to N6-acetyllysine. ATP contacts are provided by residues 439 to 441 (GEP), 463 to 468 (DTFWQT), D552, and R567. The CoA site is built by S575 and R636. The short motif at 656–668 (KTRSGKIMRRVLR) is the Nuclear localization signal element. Position 659 is a phosphoserine; by AMPK (S659). K661 carries the post-translational modification N6-acetyllysine.

This sequence belongs to the ATP-dependent AMP-binding enzyme family. As to quaternary structure, monomer. Interacts with TFEB. AMPK-mediated phosphorylated form at Ser-659 interacts with KPNA1; this interaction results in nuclear translocation of ACSS2. Interacts with the 'Thr-172' phosphorylated form of PRKAA2. Interacts with CREBBP. In terms of processing, reversibly acetylated at Lys-661. The acetyl-CoA synthase activity is inhibited by acetylation and activated by deacetylation mediated by the deacetylases SIRT1 and SIRT3. Post-translationally, glucose deprivation results in its AMPK-dependent phosphorylation at Ser-659, which leads to exposure of its nuclear localization signal, required for its interaction with KPNA1 and subsequent translocation to the nucleus.

It localises to the cytoplasm. It is found in the cytosol. Its subcellular location is the nucleus. The enzyme catalyses acetate + ATP + CoA = acetyl-CoA + AMP + diphosphate. It catalyses the reaction propanoate + ATP + CoA = propanoyl-CoA + AMP + diphosphate. Inhibited by acetylation at Lys-661 and activated by deacetylation mediated by the deacetylases SIRT1 and SIRT3. Functionally, catalyzes the synthesis of acetyl-CoA from short-chain fatty acids. Acetate is the preferred substrate. Can also utilize propionate with a much lower affinity. Nuclear ACSS2 promotes glucose deprivation-induced lysosomal biogenesis and autophagy, tumor cell survival and brain tumorigenesis. Glucose deprivation results in AMPK-mediated phosphorylation of ACSS2 leading to its translocation to the nucleus where it binds to TFEB and locally produces acetyl-CoA for histone acetylation in the promoter regions of TFEB target genes thereby activating their transcription. The regulation of genes associated with autophagy and lysosomal activity through ACSS2 is important for brain tumorigenesis and tumor survival. Acts as a chromatin-bound transcriptional coactivator that up-regulates histone acetylation and expression of neuronal genes. Can be recruited to the loci of memory-related neuronal genes to maintain a local acetyl-CoA pool, providing the substrate for histone acetylation and promoting the expression of specific genes, which is essential for maintaining long-term spatial memory. In Homo sapiens (Human), this protein is Acetyl-coenzyme A synthetase, cytoplasmic (ACSS2).